The primary structure comprises 645 residues: MPAITLPDGSVRTFDGTVTGTTIAASIGPGLAKAAMAMEVDGKPVDIGTEISSDASVKFITRKDEDALEMIRHDAAHVLAEAVQSLWPETQVTIGPSIKDGFYYDFSREKPFTPEDFPAIEAKMREIVAANTPFVREVWDRDDAIRFFEEKGEDFKAQLIQDLPEDEQISIYRQGEWLDLCRGPHLRTTGDVGTAFKLMRVAGAYWRGDHRNPMLTRIYGTAWRDKKELDAHLLRLEEAEKRDHRRIGREMDLFHIQEEAVGQIFWHRKGWRLYTVLQDYMRRAQERNNYEEVRTPQLVDRALWEASGHWDKYRENMFIATVEDEDKTLALKPMNCPCHVQIFRHGLRSYRELPLRMAEFGACHRYEPSGALHGIMRVRGFTQDDAHIFCTDDQIADETAKFVKMLAEVYSDLGFDTFRVKFSDRPETRAGSDEVWDRAEGSLKKACEIAGVEYEYNPGEGAFYGPKLEFVLTDAIGRDWQCGTLQVDYVLPERLDASYIGEDSNRHRPVMLHRAILGSFERFIGILIEQYAGKFPLWLAPTQVVVASIVSDAADYANEVAATLKAAGLQVETDTRSDKINAKIREHSLARVPVILVVGRREAEERKVAMRRLGGAAQEILSLDDAVAALAKEAQAPDIARFAKD.

The TGS domain maps to 1-61 (MPAITLPDGS…SSDASVKFIT (61 aa)). Residues 243–536 (DHRRIGREMD…LIEQYAGKFP (294 aa)) form a catalytic region. 3 residues coordinate Zn(2+): cysteine 336, histidine 387, and histidine 513.

It belongs to the class-II aminoacyl-tRNA synthetase family. As to quaternary structure, homodimer. Zn(2+) is required as a cofactor.

The protein localises to the cytoplasm. It carries out the reaction tRNA(Thr) + L-threonine + ATP = L-threonyl-tRNA(Thr) + AMP + diphosphate + H(+). Catalyzes the attachment of threonine to tRNA(Thr) in a two-step reaction: L-threonine is first activated by ATP to form Thr-AMP and then transferred to the acceptor end of tRNA(Thr). Also edits incorrectly charged L-seryl-tRNA(Thr). This chain is Threonine--tRNA ligase, found in Gluconobacter oxydans (strain 621H) (Gluconobacter suboxydans).